The sequence spans 96 residues: CRISPR-associated endoribonuclease Cas2 1 (96 aa).

Aspartate 8 contributes to the Mg(2+) binding site.

This sequence belongs to the CRISPR-associated endoribonuclease Cas2 protein family. In terms of assembly, homodimer, forms a heterotetramer with a Cas1 homodimer. Mg(2+) serves as cofactor.

In terms of biological role, CRISPR (clustered regularly interspaced short palindromic repeat), is an adaptive immune system that provides protection against mobile genetic elements (viruses, transposable elements and conjugative plasmids). CRISPR clusters contain sequences complementary to antecedent mobile elements and target invading nucleic acids. CRISPR clusters are transcribed and processed into CRISPR RNA (crRNA). Functions as a ssRNA-specific endoribonuclease. Involved in the integration of spacer DNA into the CRISPR cassette. This is CRISPR-associated endoribonuclease Cas2 1 from Moorella thermoacetica (strain ATCC 39073 / JCM 9320).